A 26-amino-acid polypeptide reads, in one-letter code: M-poneritoxin-Ng1d (26 aa).

As to expression, expressed by the venom gland.

Its subcellular location is the secreted. It localises to the target cell membrane. Has a broad spectrum of activity against both Gram-positive and Gram-negative bacteria and S.cerevisiae. Has insecticidal and hemolytic activities. May act by disrupting the integrity of the bacterial cell membrane. The protein is M-poneritoxin-Ng1d of Neoponera goeldii (Ponerine ant).